We begin with the raw amino-acid sequence, 416 residues long: 1-deoxy-D-xylulose 5-phosphate reductoisomerase (416 aa).

Residues Thr-10, Gly-11, Ser-12, Ile-13, Gly-36, Arg-37, Asn-38, and Asn-130 each coordinate NADPH. Position 131 (Lys-131) interacts with 1-deoxy-D-xylulose 5-phosphate. Glu-132 lines the NADPH pocket. Asp-156 is a Mn(2+) binding site. Ser-157, Glu-158, Ser-194, and His-217 together coordinate 1-deoxy-D-xylulose 5-phosphate. Position 158 (Glu-158) interacts with Mn(2+). Position 223 (Gly-223) interacts with NADPH. 4 residues coordinate 1-deoxy-D-xylulose 5-phosphate: Ser-230, Asn-235, Lys-236, and Glu-239. Residue Glu-239 participates in Mn(2+) binding.

Belongs to the DXR family. Requires Mg(2+) as cofactor. The cofactor is Mn(2+).

It carries out the reaction 2-C-methyl-D-erythritol 4-phosphate + NADP(+) = 1-deoxy-D-xylulose 5-phosphate + NADPH + H(+). It functions in the pathway isoprenoid biosynthesis; isopentenyl diphosphate biosynthesis via DXP pathway; isopentenyl diphosphate from 1-deoxy-D-xylulose 5-phosphate: step 1/6. Functionally, catalyzes the NADPH-dependent rearrangement and reduction of 1-deoxy-D-xylulose-5-phosphate (DXP) to 2-C-methyl-D-erythritol 4-phosphate (MEP). The protein is 1-deoxy-D-xylulose 5-phosphate reductoisomerase of Synechococcus sp. (strain CC9311).